A 403-amino-acid chain; its full sequence is S-adenosylmethionine synthase (403 aa).

His17 contacts ATP. Residue Asp19 coordinates Mg(2+). Residue Glu45 participates in K(+) binding. Residues Glu58 and Gln104 each contribute to the L-methionine site. The flexible loop stretch occupies residues 104–114; that stretch reads QSPDIAQGVDT. ATP is bound by residues 179-181, 250-251, Asp259, 265-266, Ala282, and Lys286; these read DGK, KF, and RK. Asp259 is a binding site for L-methionine. Lys290 is an L-methionine binding site.

Belongs to the AdoMet synthase family. Homotetramer; dimer of dimers. The cofactor is Mg(2+). Requires K(+) as cofactor.

Its subcellular location is the cytoplasm. It carries out the reaction L-methionine + ATP + H2O = S-adenosyl-L-methionine + phosphate + diphosphate. It participates in amino-acid biosynthesis; S-adenosyl-L-methionine biosynthesis; S-adenosyl-L-methionine from L-methionine: step 1/1. In terms of biological role, catalyzes the formation of S-adenosylmethionine (AdoMet) from methionine and ATP. The overall synthetic reaction is composed of two sequential steps, AdoMet formation and the subsequent tripolyphosphate hydrolysis which occurs prior to release of AdoMet from the enzyme. This is S-adenosylmethionine synthase from Mycobacterium bovis (strain ATCC BAA-935 / AF2122/97).